We begin with the raw amino-acid sequence, 262 residues long: Ornithine carbamoyltransferase (262 aa).

Carbamoyl phosphate-binding positions include 3-7, Q30, R54, and 81-84; these read STRTR and HPTQ. Residues N114, D178, and 182 to 183 each bind L-ornithine; that span reads SM. Residues 219–222 and T247 contribute to the carbamoyl phosphate site; that span reads HCLP.

The protein belongs to the aspartate/ornithine carbamoyltransferase superfamily. OTCase family.

Its subcellular location is the cytoplasm. The catalysed reaction is carbamoyl phosphate + L-ornithine = L-citrulline + phosphate + H(+). The protein operates within amino-acid biosynthesis; L-arginine biosynthesis; L-arginine from L-ornithine and carbamoyl phosphate: step 1/3. Its function is as follows. Reversibly catalyzes the transfer of the carbamoyl group from carbamoyl phosphate (CP) to the N(epsilon) atom of ornithine (ORN) to produce L-citrulline. This chain is Ornithine carbamoyltransferase (argF), found in Neisseria polysaccharea.